Reading from the N-terminus, the 183-residue chain is Hypoxanthine/guanine phosphoribosyltransferase (183 aa).

This sequence belongs to the purine/pyrimidine phosphoribosyltransferase family. Archaeal HPRT subfamily. As to quaternary structure, homodimer.

It is found in the cytoplasm. It carries out the reaction IMP + diphosphate = hypoxanthine + 5-phospho-alpha-D-ribose 1-diphosphate. The catalysed reaction is GMP + diphosphate = guanine + 5-phospho-alpha-D-ribose 1-diphosphate. It participates in purine metabolism; IMP biosynthesis via salvage pathway; IMP from hypoxanthine: step 1/1. Its function is as follows. Catalyzes a salvage reaction resulting in the formation of IMP that is energically less costly than de novo synthesis. This chain is Hypoxanthine/guanine phosphoribosyltransferase, found in Methanotorris igneus (strain DSM 5666 / JCM 11834 / Kol 5).